A 252-amino-acid polypeptide reads, in one-letter code: Protein PYRAB15930 (252 aa).

The protein belongs to the CinA family.

In Pyrococcus abyssi (strain GE5 / Orsay), this protein is Protein PYRAB15930.